Consider the following 107-residue polypeptide: uncharacterized protein (107 aa).

The Glutaredoxin domain maps to 6-107 (KARIDQLVTA…QEMLEVALAS (102 aa)). Lysine 23 contributes to the glutathione binding site. Cysteine 31 contacts [2Fe-2S] cluster. Residues arginine 60 and 85–86 (SD) contribute to the glutathione site.

This sequence belongs to the glutaredoxin family. Monothiol subfamily.

This is an uncharacterized protein from Synechocystis sp. (strain ATCC 27184 / PCC 6803 / Kazusa).